Reading from the N-terminus, the 498-residue chain is U4/U6 small nuclear ribonucleoprotein Prp31 (498 aa).

The disordered stretch occupies residues 1–24 (MSLADELLADLEEAAEEEEENLID). Acidic residues predominate over residues 7–24 (LLADLEEAAEEEEENLID). Coiled-coil stretches lie at residues 84–119 (EAAP…KYSK) and 180–214 (DEEL…MSFI). In terms of domain architecture, Nop spans 214 to 332 (IAPNLSIIVG…IERKFDKWQE (119 aa)). A disordered region spans residues 333–356 (PPPVKQVKPLPAPLDGQRKKRGGR). Positions 350-363 (RKKRGGRRYRKMKE) match the Nuclear localization signal (NLS) motif.

It belongs to the PRP31 family. As to quaternary structure, identified in the spliceosome B complex. Component of the U4/U6-U5 tri-snRNP complex. Component of some MLL1/MLL complex.

The protein localises to the nucleus. Its subcellular location is the nucleus speckle. It localises to the cajal body. Involved in pre-mRNA splicing as component of the spliceosome. Required for the assembly of the U4/U5/U6 tri-snRNP complex, one of the building blocks of the spliceosome. This is U4/U6 small nuclear ribonucleoprotein Prp31 (prpf31) from Xenopus laevis (African clawed frog).